Reading from the N-terminus, the 122-residue chain is Histone H2B (122 aa).

Positions 1-31 are disordered; the sequence is MPPKPSGKGQKKAGKAKGAPSTNKKRKRKRK. Proline 2 carries the post-translational modification N,N-dimethylproline. Glutamine 10 participates in a covalent cross-link: Isoglutamyl lysine isopeptide (Gln-Lys) (interchain with K-5 in histone H4). The O-linked (GlcNAc) serine glycan is linked to serine 109. A Glycyl lysine isopeptide (Lys-Gly) (interchain with G-Cter in ubiquitin) cross-link involves residue lysine 117.

This sequence belongs to the histone H2B family. The nucleosome is a histone octamer containing two molecules each of H2A, H2B, H3 and H4 assembled in one H3-H4 heterotetramer and two H2A-H2B heterodimers. The octamer wraps approximately 147 bp of DNA. In terms of processing, monoubiquitination of Lys-117 gives a specific tag for epigenetic transcriptional activation and is also prerequisite for histone H3 'Lys-4' and 'Lys-79' methylation. Post-translationally, glcNAcylation at Ser-109 promotes monoubiquitination of Lys-117. It fluctuates in response to extracellular glucose, and associates with transcribed genes.

It localises to the nucleus. Its subcellular location is the chromosome. In terms of biological role, core component of nucleosome. Nucleosomes wrap and compact DNA into chromatin, limiting DNA accessibility to the cellular machineries which require DNA as a template. Histones thereby play a central role in transcription regulation, DNA repair, DNA replication and chromosomal stability. DNA accessibility is regulated via a complex set of post-translational modifications of histones, also called histone code, and nucleosome remodeling. This Patiria pectinifera (Starfish) protein is Histone H2B.